Consider the following 190-residue polypeptide: Protein A52 (190 aa).

The protein belongs to the orthopoxvirus A52R protein family. In terms of assembly, interacts with host TRAF6 and IRAK2.

Its function is as follows. Bcl-2-like protein which targets host toll-like receptor signaling complexes to suppress innate immune response. Interacts with host TRAF6 to activate p38 and subsequently induce the expression of several cytokines such as IL-10. Also associates with host IRAK2 to inhibit NF-kappa-B signaling. The polypeptide is Protein A52 (Vaccinia virus (strain Western Reserve) (VACV)).